Consider the following 514-residue polypeptide: ATP synthase subunit alpha (514 aa).

170 to 177 (GDRQIGKS) contacts ATP.

It belongs to the ATPase alpha/beta chains family. As to quaternary structure, F-type ATPases have 2 components, CF(1) - the catalytic core - and CF(0) - the membrane proton channel. CF(1) has five subunits: alpha(3), beta(3), gamma(1), delta(1), epsilon(1). CF(0) has three main subunits: a(1), b(2) and c(9-12). The alpha and beta chains form an alternating ring which encloses part of the gamma chain. CF(1) is attached to CF(0) by a central stalk formed by the gamma and epsilon chains, while a peripheral stalk is formed by the delta and b chains.

The protein resides in the cell inner membrane. The enzyme catalyses ATP + H2O + 4 H(+)(in) = ADP + phosphate + 5 H(+)(out). Its function is as follows. Produces ATP from ADP in the presence of a proton gradient across the membrane. The alpha chain is a regulatory subunit. This Chromohalobacter salexigens (strain ATCC BAA-138 / DSM 3043 / CIP 106854 / NCIMB 13768 / 1H11) protein is ATP synthase subunit alpha.